The following is a 638-amino-acid chain: Chaperone protein DnaK (638 aa).

A Phosphothreonine; by autocatalysis modification is found at threonine 197. Residues 598 to 638 (QQSAPSGAAAGPDEGAPSGSGGTSGTRGGDDVIDAEFTETK) are disordered. A compositionally biased stretch (gly residues) spans 615-624 (SGSGGTSGTR). Acidic residues predominate over residues 628–638 (DVIDAEFTETK).

Belongs to the heat shock protein 70 family.

Its function is as follows. Acts as a chaperone. The polypeptide is Chaperone protein DnaK (Gloeobacter violaceus (strain ATCC 29082 / PCC 7421)).